We begin with the raw amino-acid sequence, 368 residues long: Dual-specificity RNA methyltransferase RlmN (368 aa).

E94 functions as the Proton acceptor in the catalytic mechanism. In terms of domain architecture, Radical SAM core spans 100 to 334; it reads EEDRATLCVS…VIVRKTRGDD (235 aa). Residues C107 and C339 are joined by a disulfide bond. C114, C118, and C121 together coordinate [4Fe-4S] cluster. Residues 163–164, S195, 217–219, and N296 each bind S-adenosyl-L-methionine; these read GE and SLH. The active-site S-methylcysteine intermediate is the C339.

It belongs to the radical SAM superfamily. RlmN family. Requires [4Fe-4S] cluster as cofactor.

Its subcellular location is the cytoplasm. It carries out the reaction adenosine(2503) in 23S rRNA + 2 reduced [2Fe-2S]-[ferredoxin] + 2 S-adenosyl-L-methionine = 2-methyladenosine(2503) in 23S rRNA + 5'-deoxyadenosine + L-methionine + 2 oxidized [2Fe-2S]-[ferredoxin] + S-adenosyl-L-homocysteine. It catalyses the reaction adenosine(37) in tRNA + 2 reduced [2Fe-2S]-[ferredoxin] + 2 S-adenosyl-L-methionine = 2-methyladenosine(37) in tRNA + 5'-deoxyadenosine + L-methionine + 2 oxidized [2Fe-2S]-[ferredoxin] + S-adenosyl-L-homocysteine. Its function is as follows. Specifically methylates position 2 of adenine 2503 in 23S rRNA and position 2 of adenine 37 in tRNAs. m2A2503 modification seems to play a crucial role in the proofreading step occurring at the peptidyl transferase center and thus would serve to optimize ribosomal fidelity. This Aeromonas salmonicida (strain A449) protein is Dual-specificity RNA methyltransferase RlmN.